The primary structure comprises 416 residues: 3-phosphoshikimate 1-carboxyvinyltransferase (416 aa).

K20, S21, and R25 together coordinate 3-phosphoshikimate. K20 provides a ligand contact to phosphoenolpyruvate. Residues G88 and R116 each contribute to the phosphoenolpyruvate site. S159, S160, Q161, S186, D300, and K327 together coordinate 3-phosphoshikimate. Q161 lines the phosphoenolpyruvate pocket. Catalysis depends on D300, which acts as the Proton acceptor. Phosphoenolpyruvate contacts are provided by R331 and R373.

The protein belongs to the EPSP synthase family. As to quaternary structure, monomer.

It is found in the cytoplasm. It catalyses the reaction 3-phosphoshikimate + phosphoenolpyruvate = 5-O-(1-carboxyvinyl)-3-phosphoshikimate + phosphate. Its pathway is metabolic intermediate biosynthesis; chorismate biosynthesis. Catalyzes the transfer of the enolpyruvyl moiety of phosphoenolpyruvate (PEP) to the 5-hydroxyl of shikimate-3-phosphate (S3P) to produce enolpyruvyl shikimate-3-phosphate and inorganic phosphate. The polypeptide is 3-phosphoshikimate 1-carboxyvinyltransferase (Archaeoglobus fulgidus (strain ATCC 49558 / DSM 4304 / JCM 9628 / NBRC 100126 / VC-16)).